Consider the following 78-residue polypeptide: Small ribosomal subunit protein bS18 (78 aa).

This sequence belongs to the bacterial ribosomal protein bS18 family. In terms of assembly, part of the 30S ribosomal subunit. Forms a tight heterodimer with protein bS6.

Binds as a heterodimer with protein bS6 to the central domain of the 16S rRNA, where it helps stabilize the platform of the 30S subunit. In Thermobifida fusca (strain YX), this protein is Small ribosomal subunit protein bS18.